We begin with the raw amino-acid sequence, 122 residues long: Large ribosomal subunit protein bL12 (122 aa).

Belongs to the bacterial ribosomal protein bL12 family. As to quaternary structure, homodimer. Part of the ribosomal stalk of the 50S ribosomal subunit. Forms a multimeric L10(L12)X complex, where L10 forms an elongated spine to which 2 to 4 L12 dimers bind in a sequential fashion. Binds GTP-bound translation factors.

Forms part of the ribosomal stalk which helps the ribosome interact with GTP-bound translation factors. Is thus essential for accurate translation. This chain is Large ribosomal subunit protein bL12, found in Streptococcus mutans serotype c (strain ATCC 700610 / UA159).